The primary structure comprises 213 residues: 3-isopropylmalate dehydratase small subunit (213 aa).

Belongs to the LeuD family. LeuD type 1 subfamily. As to quaternary structure, heterodimer of LeuC and LeuD.

It carries out the reaction (2R,3S)-3-isopropylmalate = (2S)-2-isopropylmalate. It participates in amino-acid biosynthesis; L-leucine biosynthesis; L-leucine from 3-methyl-2-oxobutanoate: step 2/4. Its function is as follows. Catalyzes the isomerization between 2-isopropylmalate and 3-isopropylmalate, via the formation of 2-isopropylmaleate. This chain is 3-isopropylmalate dehydratase small subunit, found in Neisseria meningitidis serogroup B (strain ATCC BAA-335 / MC58).